Here is a 335-residue protein sequence, read N- to C-terminus: Putative peroxisomal biogenesis factor 19 (335 aa).

2 disordered regions span residues 14–70 (LETQ…LGND) and 104–124 (YNKD…PSEE). Low complexity-rich tracts occupy residues 22–55 (PTTT…PSTI) and 109–119 (NNNSDDSNNGG).

The protein belongs to the peroxin-19 family.

Its subcellular location is the peroxisome. This Dictyostelium discoideum (Social amoeba) protein is Putative peroxisomal biogenesis factor 19 (pex19).